The chain runs to 146 residues: Large ribosomal subunit protein bL17 (146 aa).

A compositionally biased stretch (low complexity) spans 124–134 (EASRATRAAAS). The disordered stretch occupies residues 124–146 (EASRATRAAASKKAEEEAASEAE).

The protein belongs to the bacterial ribosomal protein bL17 family. As to quaternary structure, part of the 50S ribosomal subunit. Contacts protein L32.

The protein is Large ribosomal subunit protein bL17 of Corynebacterium kroppenstedtii (strain DSM 44385 / JCM 11950 / CIP 105744 / CCUG 35717).